We begin with the raw amino-acid sequence, 99 residues long: MIKSELVQIVAARNPHLYHRDVENIVNAVLDEITDALAAGNRVELRGFGAFSVKNRPSRSGRNPRTGDTVFVEEKWVPFFKTGKELRERLNPGQADEED.

This sequence belongs to the bacterial histone-like protein family. As to quaternary structure, heterodimer of an alpha and a beta chain.

Functionally, this protein is one of the two subunits of integration host factor, a specific DNA-binding protein that functions in genetic recombination as well as in transcriptional and translational control. This chain is Integration host factor subunit beta, found in Rhizobium etli (strain CIAT 652).